We begin with the raw amino-acid sequence, 682 residues long: Beta-galactosidase (682 aa).

Positions 1–23 (MPGFLVRILPLLLPLLLLGPTRG) are cleaved as a signal peptide. Positions 24–28 (LRNAT) are excised as a propeptide. N-linked (GlcNAc...) asparagine glycosylation occurs at Asn26. Residues Tyr83, Glu129, and Asn187 each coordinate substrate. Residue Glu188 is the Proton donor of the active site. Cys195 and Cys230 are oxidised to a cystine. N-linked (GlcNAc...) asparagine glycosylation occurs at Asn247. Glu268 (nucleophile) is an active-site residue. A substrate-binding site is contributed by Tyr333. Asn464, Asn498, Asn545, and Asn555 each carry an N-linked (GlcNAc...) asparagine glycan. A disulfide bond links Cys626 and Cys634.

Belongs to the glycosyl hydrolase 35 family. As to quaternary structure, homodimer. May form higher multimers.

The protein localises to the lysosome. The catalysed reaction is Hydrolysis of terminal non-reducing beta-D-galactose residues in beta-D-galactosides.. Cleaves beta-linked terminal galactosyl residues from gangliosides, glycoproteins, and glycosaminoglycans. This is Beta-galactosidase (GLB1) from Macaca fascicularis (Crab-eating macaque).